Consider the following 617-residue polypeptide: Threonine--tRNA ligase (617 aa).

A catalytic region spans residues 209-502 (DHRRLGKDLD…MTENYAGDFP (294 aa)). Residues C302, H353, and H479 each coordinate Zn(2+).

This sequence belongs to the class-II aminoacyl-tRNA synthetase family. Homodimer. Requires Zn(2+) as cofactor.

The protein resides in the cytoplasm. It carries out the reaction tRNA(Thr) + L-threonine + ATP = L-threonyl-tRNA(Thr) + AMP + diphosphate + H(+). Catalyzes the attachment of threonine to tRNA(Thr) in a two-step reaction: L-threonine is first activated by ATP to form Thr-AMP and then transferred to the acceptor end of tRNA(Thr). Also edits incorrectly charged L-seryl-tRNA(Thr). This Synechococcus sp. (strain CC9311) protein is Threonine--tRNA ligase.